Here is a 364-residue protein sequence, read N- to C-terminus: Selection and upkeep of intraepithelial T-cells protein 11 (364 aa).

The first 28 residues, 1 to 28, serve as a signal peptide directing secretion; the sequence is MEPSASCLPGFFMVCILLKITVLTQVMS. Residues 29 to 118 enclose the Ig-like V-type domain; that stretch reads LDIQINTQIP…TNQEKRRSII (90 aa). At 29–138 the chain is on the extracellular side; it reads LDIQINTQIP…MSLMSNNLLY (110 aa). The cysteines at positions 48 and 102 are disulfide-linked. A helical membrane pass occupies residues 139–159; sequence LGIYLIFILFLNFLKGILFCL. At 160 to 186 the chain is on the cytoplasmic side; sequence TKRLVHFRKRMIKIKKVWSNKTRACCP. A helical transmembrane segment spans residues 187–207; the sequence is LIWEFLEIVLFIAFLPLYLMF. At 208-230 the chain is on the extracellular side; the sequence is RIRVFTLDEAHILYNNWLWKVCK. A helical transmembrane segment spans residues 231–251; sequence TLIAMMILFTVLILFLLWTLN. Residues 252 to 364 are Cytoplasmic-facing; sequence RYGKMPCLSS…LYSKLGNLTH (113 aa).

Belongs to the SKINT family. As to expression, expressed in skin and thymus.

It is found in the membrane. In terms of biological role, may act by engaging a cell surface molecule on immature T-cells in the embryonic thymus. This is Selection and upkeep of intraepithelial T-cells protein 11 (Skint11) from Mus musculus (Mouse).